A 516-amino-acid chain; its full sequence is Probable rhamnogalacturonase B (516 aa).

The signal sequence occupies residues 1-21 (MRLHAFTLLSLLGLVPSFAAA). An intrachain disulfide couples Cys-42 to Cys-68. N-linked (GlcNAc...) asparagine glycosylation is present at Asn-145. The active-site Proton donor is the Asp-219. Cys-221 and Cys-238 are joined by a disulfide. A glycan (N-linked (GlcNAc...) asparagine) is linked at Asn-239. Residue His-294 is part of the active site. N-linked (GlcNAc...) asparagine glycosylation is present at Asn-321. 2 cysteine pairs are disulfide-bonded: Cys-344-Cys-350 and Cys-372-Cys-381. A disordered region spans residues 462–516 (ETPAAASRSEQVVQGASQETSQPAPESAGPVRSVPTGGNRPSRHRHGHHHFWIAA). Positions 469–485 (RSEQVVQGASQETSQPA) are enriched in polar residues. The span at 502 to 516 (PSRHRHGHHHFWIAA) shows a compositional bias: basic residues.

It belongs to the glycosyl hydrolase 28 family.

The protein localises to the secreted. It catalyses the reaction Endohydrolysis of alpha-D-GalA-(1-&gt;2)-alpha-L-Rha glycosidic bond in the rhamnogalacturonan I backbone with initial inversion of anomeric configuration releasing oligosaccharides with beta-D-GalA at the reducing end.. Pectinolytic enzymes consist of four classes of enzymes: pectine lyase, polygalacturonase, pectin methylesterase and rhamnogalacturonase. Hydrolyzes alpha-D-galacturonopyranosyl-(1,2)-alpha-L-rhamnopyranosyl linkages in the backbone of the hairy regions of pectins. The protein is Probable rhamnogalacturonase B (rhgB) of Neosartorya fischeri (strain ATCC 1020 / DSM 3700 / CBS 544.65 / FGSC A1164 / JCM 1740 / NRRL 181 / WB 181) (Aspergillus fischerianus).